Here is a 224-residue protein sequence, read N- to C-terminus: Ribonuclease HII (224 aa).

Residues 1-210 (MKLGGIDEAG…LKKIEEKLQK (210 aa)) form the RNase H type-2 domain. The a divalent metal cation site is built by aspartate 7, glutamate 8, and aspartate 105.

Belongs to the RNase HII family. Mn(2+) serves as cofactor. Requires Mg(2+) as cofactor.

The protein resides in the cytoplasm. It catalyses the reaction Endonucleolytic cleavage to 5'-phosphomonoester.. In terms of biological role, endonuclease that specifically degrades the RNA of RNA-DNA hybrids. This chain is Ribonuclease HII, found in Thermococcus sibiricus (strain DSM 12597 / MM 739).